The primary structure comprises 183 residues: Peptide deformylase (183 aa).

Residues cysteine 110 and histidine 153 each coordinate Fe cation. Glutamate 154 is an active-site residue. Histidine 157 contacts Fe cation.

The protein belongs to the polypeptide deformylase family. Fe(2+) is required as a cofactor.

The catalysed reaction is N-terminal N-formyl-L-methionyl-[peptide] + H2O = N-terminal L-methionyl-[peptide] + formate. Its function is as follows. Removes the formyl group from the N-terminal Met of newly synthesized proteins. Requires at least a dipeptide for an efficient rate of reaction. N-terminal L-methionine is a prerequisite for activity but the enzyme has broad specificity at other positions. This Listeria monocytogenes serotype 4b (strain CLIP80459) protein is Peptide deformylase.